A 227-amino-acid chain; its full sequence is Cytochrome c oxidase subunit 2 (227 aa).

The Mitochondrial intermembrane segment spans residues 1 to 14 (MAHPVQLGLQDATS). Residues 15-45 (PVMEELITFHDQALMAMFLISFLILYALSST) traverse the membrane as a helical segment. Topologically, residues 46-59 (LTTKLTNTNITDAQ) are mitochondrial matrix. Residues 60–87 (EMETIWTILPAVILILIALPSLRILYMT) traverse the membrane as a helical segment. Residues 88 to 227 (DEINNPSFTI…IFEMGPVFTL (140 aa)) are Mitochondrial intermembrane-facing. 6 residues coordinate Cu cation: His-161, Cys-196, Glu-198, Cys-200, His-204, and Met-207. Glu-198 contributes to the Mg(2+) binding site.

The protein belongs to the cytochrome c oxidase subunit 2 family. In terms of assembly, component of the cytochrome c oxidase (complex IV, CIV), a multisubunit enzyme composed of 14 subunits. The complex is composed of a catalytic core of 3 subunits MT-CO1, MT-CO2 and MT-CO3, encoded in the mitochondrial DNA, and 11 supernumerary subunits COX4I, COX5A, COX5B, COX6A, COX6B, COX6C, COX7A, COX7B, COX7C, COX8 and NDUFA4, which are encoded in the nuclear genome. The complex exists as a monomer or a dimer and forms supercomplexes (SCs) in the inner mitochondrial membrane with NADH-ubiquinone oxidoreductase (complex I, CI) and ubiquinol-cytochrome c oxidoreductase (cytochrome b-c1 complex, complex III, CIII), resulting in different assemblies (supercomplex SCI(1)III(2)IV(1) and megacomplex MCI(2)III(2)IV(2)). Found in a complex with TMEM177, COA6, COX18, COX20, SCO1 and SCO2. Interacts with TMEM177 in a COX20-dependent manner. Interacts with COX20. Interacts with COX16. Requires Cu cation as cofactor.

It is found in the mitochondrion inner membrane. It carries out the reaction 4 Fe(II)-[cytochrome c] + O2 + 8 H(+)(in) = 4 Fe(III)-[cytochrome c] + 2 H2O + 4 H(+)(out). In terms of biological role, component of the cytochrome c oxidase, the last enzyme in the mitochondrial electron transport chain which drives oxidative phosphorylation. The respiratory chain contains 3 multisubunit complexes succinate dehydrogenase (complex II, CII), ubiquinol-cytochrome c oxidoreductase (cytochrome b-c1 complex, complex III, CIII) and cytochrome c oxidase (complex IV, CIV), that cooperate to transfer electrons derived from NADH and succinate to molecular oxygen, creating an electrochemical gradient over the inner membrane that drives transmembrane transport and the ATP synthase. Cytochrome c oxidase is the component of the respiratory chain that catalyzes the reduction of oxygen to water. Electrons originating from reduced cytochrome c in the intermembrane space (IMS) are transferred via the dinuclear copper A center (CU(A)) of subunit 2 and heme A of subunit 1 to the active site in subunit 1, a binuclear center (BNC) formed by heme A3 and copper B (CU(B)). The BNC reduces molecular oxygen to 2 water molecules using 4 electrons from cytochrome c in the IMS and 4 protons from the mitochondrial matrix. The chain is Cytochrome c oxidase subunit 2 (MT-CO2) from Papio anubis (Olive baboon).